The sequence spans 497 residues: Cytochrome P450 76AD1 (497 aa).

A helical membrane pass occupies residues A4 to F24. C439 is a binding site for heme.

The protein belongs to the cytochrome P450 family. Heme serves as cofactor.

It localises to the membrane. The protein operates within pigment biosynthesis; betalain biosynthesis. Converts L-DOPA to cyclo-DOPA in the betalain pathway. Provides the cyclo-DOPA moiety of all red betacyanins. This is Cytochrome P450 76AD1 from Beta vulgaris (Sugar beet).